We begin with the raw amino-acid sequence, 170 residues long: Transcription factor E (170 aa).

Residues 1-93 form the HTH TFE/IIEalpha-type domain; it reads MKEAYLYIVE…TWYVDDDVIR (93 aa).

It belongs to the TFE family. Monomer. Interaction with RNA polymerase subunits RpoF and RpoE is necessary for Tfe stimulatory transcription activity. Able to interact with Tbp and RNA polymerase in the absence of DNA promoter. Interacts both with the preinitiation and elongation complexes.

Functionally, transcription factor that plays a role in the activation of archaeal genes transcribed by RNA polymerase. Facilitates transcription initiation by enhancing TATA-box recognition by TATA-box-binding protein (Tbp), and transcription factor B (Tfb) and RNA polymerase recruitment. Not absolutely required for transcription in vitro, but particularly important in cases where Tbp or Tfb function is not optimal. It dynamically alters the nucleic acid-binding properties of RNA polymerases by stabilizing the initiation complex and destabilizing elongation complexes. Seems to translocate with the RNA polymerase following initiation and acts by binding to the non template strand of the transcription bubble in elongation complexes. The chain is Transcription factor E from Pyrobaculum neutrophilum (strain DSM 2338 / JCM 9278 / NBRC 100436 / V24Sta) (Thermoproteus neutrophilus).